Here is a 296-residue protein sequence, read N- to C-terminus: Cell surface glycoprotein CD200 receptor 3 (296 aa).

The first 25 residues, 1-25 (MHALGRTLALMLLIFITILVPESSC), serve as a signal peptide directing secretion. Over 26-245 (SVKGREEIPP…NRGTTSILPS (220 aa)) the chain is Extracellular. Positions 48–162 (PDGVGVTMEI…GIFQERHSIQ (115 aa)) constitute an Ig-like V-type domain. A disulfide bridge connects residues cysteine 75 and cysteine 146. In terms of domain architecture, Ig-like C2-type spans 151–232 (TDGIFQERHS…SHLTDNWILS (82 aa)). Residues asparagine 167 and asparagine 199 are each glycosylated (N-linked (GlcNAc...) asparagine). The cysteines at positions 172 and 220 are disulfide-linked. A helical transmembrane segment spans residues 246–266 (LLSILYVKLAVTVLIVGFAFF). At 267-296 (QKRNYFSSRDLVFMKERRSKRSVWQREALG) the chain is on the cytoplasmic side.

This sequence belongs to the CD200R family. In terms of assembly, isoform 3 interacts with TYROBP. Isoform 8 does not interact with TYROBP. As to expression, expressed in uterus and bone marrow-derived mast cells (at protein level). Expressed in uterus, spleen, bone marrow-derived dendritic, basophil and mast cells. Expressed in the lung of N.brasiliensis-infected mice. Weakly expressed in brain, testis, lung and thymus.

Its subcellular location is the membrane. Its function is as follows. According to PubMed:15187158 isoform 4 is a receptor for the CD200 cell surface glycoprotein. According to PubMed:16081818 isoform 4 is not a receptor for the CD200/OX2 cell surface glycoprotein. Isoform 1, isoform 2 and isoform 3 are involved in the recruitment or surface expression of the TYROBP receptor. Isoform 6, isoform 7 and isoform 8 are not involved in the recruitment or surface expression of the TYROBP receptor. The protein is Cell surface glycoprotein CD200 receptor 3 (Cd200r3) of Mus musculus (Mouse).